A 340-amino-acid chain; its full sequence is Ubiquitin-like domain-containing CTD phosphatase (340 aa).

Residues 24 to 101 (LTLTVKWNGK…MTMIGTVEDD (78 aa)) form the Ubiquitin-like domain. One can recognise an FCP1 homology domain in the interval 151 to 312 (CRQGKKLLVL…VKLTQYLLTI (162 aa)). A phosphatase region spans residues 151 to 312 (CRQGKKLLVL…VKLTQYLLTI (162 aa)). D161, D163, and D271 together coordinate Mg(2+).

It depends on Mg(2+) as a cofactor.

The protein resides in the nucleus. The enzyme catalyses O-phospho-L-seryl-[protein] + H2O = L-seryl-[protein] + phosphate. It carries out the reaction O-phospho-L-threonyl-[protein] + H2O = L-threonyl-[protein] + phosphate. Its function is as follows. Dephosphorylates 26S nuclear proteasomes, thereby decreasing their proteolytic activity. The dephosphorylation may prevent assembly of the core and regulatory particles (CP and RP) into mature 26S proteasome. The protein is Ubiquitin-like domain-containing CTD phosphatase of Arabidopsis thaliana (Mouse-ear cress).